The primary structure comprises 585 residues: A-type ATP synthase subunit A (585 aa).

Glycine 231–threonine 238 is a binding site for ATP.

This sequence belongs to the ATPase alpha/beta chains family. Has multiple subunits with at least A(3), B(3), C, D, E, F, H, I and proteolipid K(x).

The protein resides in the cell membrane. The enzyme catalyses ATP + H2O + 4 H(+)(in) = ADP + phosphate + 5 H(+)(out). Its function is as follows. Component of the A-type ATP synthase that produces ATP from ADP in the presence of a proton gradient across the membrane. The A chain is the catalytic subunit. This Desulfurococcus sp. (strain SY) protein is A-type ATP synthase subunit A.